The following is an 824-amino-acid chain: ABC transporter B family member 7 (824 aa).

Residues 41-101 (RNSVKFNLDT…NKNNKNKINN (61 aa)) form a disordered region. Positions 63–101 (NNNKNNNNNNNNNNNNNNNNNNNNNNNNNNKNNKNKINN) are enriched in low complexity. 6 consecutive transmembrane segments (helical) span residues 164 to 184 (IWYFVFAFLALSITTLCQLAL), 252 to 272 (WIIIIVLVQTPFLFARYLLFT), 325 to 345 (LSTLVRCSLQLIGGLLILVFL), 347 to 367 (WKVTLLMISFLVILLISFLVF), 431 to 451 (AFWISFGSLLVMGTIIGIYGF), and 461 to 481 (ILLLQFILYSLMITASMNGLI). One can recognise an ABC transmembrane type-1 domain in the interval 167–489 (FVFAFLALSI…LIGSINEIQK (323 aa)). The ABC transporter domain maps to 521–767 (ISFDNVYFNN…STSFYVTSVL (247 aa)). ATP is bound at residue 570 to 576 (GPSQSKE). Residues 772–813 (NKYNNNNNNNNNNNNNNNNNNNNNNNNNNNNNNNNNNNNINN) are disordered.

The protein belongs to the ABC transporter superfamily. ABCB family.

Its subcellular location is the membrane. The protein is ABC transporter B family member 7 (abcB7) of Dictyostelium discoideum (Social amoeba).